Consider the following 57-residue polypeptide: Large ribosomal subunit protein bL32c (57 aa).

It belongs to the bacterial ribosomal protein bL32 family.

The protein resides in the plastid. It localises to the chloroplast. The protein is Large ribosomal subunit protein bL32c of Amborella trichopoda.